Consider the following 285-residue polypeptide: Ribonuclease H1 (285 aa).

The interval Arg-72 to Glu-122 is disordered. The region spanning Met-135 to Lys-281 is the RNase H type-1 domain. Mg(2+) is bound by residues Asp-144, Glu-185, Asp-209, and Asp-273.

It belongs to the RNase H family. In terms of assembly, monomer. Mg(2+) serves as cofactor.

The protein resides in the cytoplasm. The catalysed reaction is Endonucleolytic cleavage to 5'-phosphomonoester.. With respect to regulation, in the presence of magnesium, manganese is inhibitory. Endonuclease that specifically degrades the RNA of RNA-DNA hybrids. Plays a role in RNA polymerase II (RNAp II) transcription termination by degrading R-loop RNA-DNA hybrid formation at G-rich pause sites located downstream of the poly(A) site and behind the elongating RNAp II. This Rattus norvegicus (Rat) protein is Ribonuclease H1 (Rnaseh1).